Reading from the N-terminus, the 252-residue chain is Adenosine 5'-phosphosulfate reductase (252 aa).

[4Fe-4S] cluster is bound by residues C125, C126, C208, and C211. Residues 219-252 (DGYSREGRWSDRDKTECGLHTSPEDEDGAHAAES) are disordered. A compositionally biased stretch (basic and acidic residues) spans 221 to 235 (YSREGRWSDRDKTEC). C235 (nucleophile; cysteine thiosulfonate intermediate) is an active-site residue.

The protein belongs to the PAPS reductase family. CysH subfamily. [4Fe-4S] cluster is required as a cofactor.

It is found in the cytoplasm. It catalyses the reaction [thioredoxin]-disulfide + sulfite + AMP + 2 H(+) = adenosine 5'-phosphosulfate + [thioredoxin]-dithiol. It functions in the pathway sulfur metabolism; hydrogen sulfide biosynthesis; sulfite from sulfate. Catalyzes the formation of sulfite from adenosine 5'-phosphosulfate (APS) using thioredoxin as an electron donor. The sequence is that of Adenosine 5'-phosphosulfate reductase from Salinibacter ruber (strain DSM 13855 / M31).